Here is a 104-residue protein sequence, read N- to C-terminus: Pyrimidine/purine nucleoside phosphorylase (104 aa).

This sequence belongs to the nucleoside phosphorylase PpnP family.

The enzyme catalyses a purine D-ribonucleoside + phosphate = a purine nucleobase + alpha-D-ribose 1-phosphate. The catalysed reaction is adenosine + phosphate = alpha-D-ribose 1-phosphate + adenine. It carries out the reaction cytidine + phosphate = cytosine + alpha-D-ribose 1-phosphate. It catalyses the reaction guanosine + phosphate = alpha-D-ribose 1-phosphate + guanine. The enzyme catalyses inosine + phosphate = alpha-D-ribose 1-phosphate + hypoxanthine. The catalysed reaction is thymidine + phosphate = 2-deoxy-alpha-D-ribose 1-phosphate + thymine. It carries out the reaction uridine + phosphate = alpha-D-ribose 1-phosphate + uracil. It catalyses the reaction xanthosine + phosphate = alpha-D-ribose 1-phosphate + xanthine. Catalyzes the phosphorolysis of diverse nucleosides, yielding D-ribose 1-phosphate and the respective free bases. Can use uridine, adenosine, guanosine, cytidine, thymidine, inosine and xanthosine as substrates. Also catalyzes the reverse reactions. This Trichlorobacter lovleyi (strain ATCC BAA-1151 / DSM 17278 / SZ) (Geobacter lovleyi) protein is Pyrimidine/purine nucleoside phosphorylase.